A 295-amino-acid chain; its full sequence is MSSENKSPLLERARNLVPHLETERHKGQAGRIGIVGGSLEYTGAPYFAAISALKVGADLVHVFCPQAAAQVIKGYSPELIVHPLLDSNNAIIQIEPWLERLHVLVIGPGLGRDRLILQTVAELIRICRQLQKPLIIDADGLFLITQDIGLVKDYYGVILTPNAIEFCRLFGKDRDQTMASLGRLGAGVTVIEKGLNDRIYDSLTSEKYECPQGGSGRRCGGQGDLLAGALATFYYWALESKQEISPAMVACFAASTLTKTCNKYAFKAKGRSMTCSDMIDQIHQVFDDLFEHKKD.

In terms of domain architecture, YjeF C-terminal spans 9–289 (LLERARNLVP…DQIHQVFDDL (281 aa)). Residues glycine 109 and 162–168 (NAIEFCR) each bind (6S)-NADPHX. ATP contacts are provided by residues 193-197 (KGLND) and 214-223 (GSGRRCGGQG). Residue aspartate 224 participates in (6S)-NADPHX binding.

The protein belongs to the NnrD/CARKD family. Mg(2+) serves as cofactor.

The enzyme catalyses (6S)-NADHX + ATP = ADP + phosphate + NADH + H(+). It carries out the reaction (6S)-NADPHX + ATP = ADP + phosphate + NADPH + H(+). Functionally, catalyzes the dehydration of the S-form of NAD(P)HX at the expense of ATP, which is converted to ADP. Together with NAD(P)HX epimerase, which catalyzes the epimerization of the S- and R-forms, the enzyme allows the repair of both epimers of NAD(P)HX, a damaged form of NAD(P)H that is a result of enzymatic or heat-dependent hydration. This chain is ATP-dependent (S)-NAD(P)H-hydrate dehydratase, found in Anopheles darlingi (Mosquito).